The chain runs to 227 residues: Cytochrome c oxidase subunit 2 (227 aa).

Residues 1 to 14 (MAYPLQLGLQDATS) lie on the Mitochondrial intermembrane side of the membrane. Residues 15–45 (PIMEELMNFHDHTLMIVFLISSLVLYIISLM) traverse the membrane as a helical segment. At 46 to 59 (LTTKLTHTSTMDAQ) the chain is on the mitochondrial matrix side. The chain crosses the membrane as a helical span at residues 60–87 (EVETIWTILPAVILIMIALPSLRILYMM). Over 88 to 227 (DEINNPVLTV…HFENWSASMI (140 aa)) the chain is Mitochondrial intermembrane. The Cu cation site is built by His-161, Cys-196, Glu-198, Cys-200, His-204, and Met-207. Glu-198 provides a ligand contact to Mg(2+).

This sequence belongs to the cytochrome c oxidase subunit 2 family. In terms of assembly, component of the cytochrome c oxidase (complex IV, CIV), a multisubunit enzyme composed of 14 subunits. The complex is composed of a catalytic core of 3 subunits MT-CO1, MT-CO2 and MT-CO3, encoded in the mitochondrial DNA, and 11 supernumerary subunits COX4I, COX5A, COX5B, COX6A, COX6B, COX6C, COX7A, COX7B, COX7C, COX8 and NDUFA4, which are encoded in the nuclear genome. The complex exists as a monomer or a dimer and forms supercomplexes (SCs) in the inner mitochondrial membrane with NADH-ubiquinone oxidoreductase (complex I, CI) and ubiquinol-cytochrome c oxidoreductase (cytochrome b-c1 complex, complex III, CIII), resulting in different assemblies (supercomplex SCI(1)III(2)IV(1) and megacomplex MCI(2)III(2)IV(2)). Found in a complex with TMEM177, COA6, COX18, COX20, SCO1 and SCO2. Interacts with TMEM177 in a COX20-dependent manner. Interacts with COX20. Interacts with COX16. Requires Cu cation as cofactor.

The protein resides in the mitochondrion inner membrane. It catalyses the reaction 4 Fe(II)-[cytochrome c] + O2 + 8 H(+)(in) = 4 Fe(III)-[cytochrome c] + 2 H2O + 4 H(+)(out). Functionally, component of the cytochrome c oxidase, the last enzyme in the mitochondrial electron transport chain which drives oxidative phosphorylation. The respiratory chain contains 3 multisubunit complexes succinate dehydrogenase (complex II, CII), ubiquinol-cytochrome c oxidoreductase (cytochrome b-c1 complex, complex III, CIII) and cytochrome c oxidase (complex IV, CIV), that cooperate to transfer electrons derived from NADH and succinate to molecular oxygen, creating an electrochemical gradient over the inner membrane that drives transmembrane transport and the ATP synthase. Cytochrome c oxidase is the component of the respiratory chain that catalyzes the reduction of oxygen to water. Electrons originating from reduced cytochrome c in the intermembrane space (IMS) are transferred via the dinuclear copper A center (CU(A)) of subunit 2 and heme A of subunit 1 to the active site in subunit 1, a binuclear center (BNC) formed by heme A3 and copper B (CU(B)). The BNC reduces molecular oxygen to 2 water molecules using 4 electrons from cytochrome c in the IMS and 4 protons from the mitochondrial matrix. The protein is Cytochrome c oxidase subunit 2 (MT-CO2) of Zelotomys hildegardeae (Hildegarde's broad-headed mouse).